Consider the following 2063-residue polypeptide: MADGAPRPQLYRSVSFKLLERWSGGPGLREEDTDTPGLRRRASCRPTTAARGQPSRRVSKLASGPLAAPAQPRPLRSLSPSVRQLSRRFDAPRLDDGSAGTRDGGVLPAAAEEAAEGPARGAWPSVTEMRKLFGGPGSRRPSADSESPGTPSPDGAAWEPPARESRQPPTPPPRTCFPLAGLRSARPLTGPETEGRLRRPQQQQERAQRPADGLHSWHIFSQPQAGARASCSSSSIAASYPVSRSRAASSSEEEEEGPPQLPGAQSPAYHGGHSSGSDDDRDGEGGHRWGGRPGLRPGSSLLDQDCRPDSDGLNLSSMNSAGVSGSPEPPTSPRAPREEGLREWGSGSPPCVPGPQEGLRPMSDSVGGAFRVAKVSFPSYLASPAGSRGSSRYSSTETLKDDDLWSSRGSGGWGVYRSPSFGAGEGLLRSQARTRAKGPGGTSRALRDGGFEPEKSRQRKSLSNPDIASETLTLLSFLRSDLSELRVRKPGGSSGDRGSNPLDGRDSPSAGGPVGQLEPIPIPAPASPGTRPTLKDLTATLRRAKSFTCSEKPMARRLPRTSALKSSSSELLLTGPGAEEDPLPLIVQDQYVQEARQVFEKIQRMGAQQDDGSDAPPGSPDWAGDVTRGQRSQEELSGPESSLTDEGIGADPEPPVAAFCGLGTTGMWRPLSSSSAQTNHHGPGTEDSLGGWALVSPETPPTPGALRRRRKVPPSGSGGSELSNGEAGEAYRSLSDPIPQRHRAATSEEPTGFSVDSNLLGSLSPKTGLPATSAMDEGLTSGHSDWSVGSEESKGYQEVIQSIVQGPGTLGRVVDDRIAGKAPKKKSLSDPSRRGELAGPGFEGPGGEPIREVEPMLPPSSSEPILVEQRAEPEEPGATRSRAQSERALPEALPPPATAHRNFHLDPKLADILSPRLIRRGSKKRPARSSHQELRRDEGSQDQTGSLSRARPSSRHVRHASVPATFMPIVVPEPPTSVGPPVAVPEPIGFPTRAHPTLQAPSLEDVTKQYMLNLHSGEVPAPVPVDMPCLPLAAPPSAEAKPPEAARPADEPTPASKCCSKPQVDMRKHVAMTLLDTEQSYVESLRTLMQGYMQPLKQPENSVLCDPSLVDEIFDQIPELLEHHEQFLEQVRHCMQTWHAQQKVGALLVQSFSKDVLVNIYSAYIDNFLNAKDAVRVAKEARPAFLKFLEQSMRENKEKQALSDLMIKPVQRIPRYELLVKDLLKHTPEDHPDHPLLLEAQRNIKQVAERINKGVRSAEEAERHARVLQEIEAHIEGMEDLQAPLRRFLRQEMVIEVKAIGGKKDRSLFLFTDLIVCTTLKRKSGSLRRSSMSLYTAASVIDTASKYKMLWKLPLEDADIIKGASQATNRENIQKAISRLDEDLTTLGQMSKLSESLGFPHQSLDDALRDLSAAMHRDLSEKQALCYALSFPPTKLELCATRPEGTDSYIFEFPHPDARLGFEQAFDEAKRKLASSKSCLDPEFLKAIPIMKTRSGMQFSCAAPTLNSCPEPSPEVWVCNSDGYVGQVCLLSLRAEPDVEACIAVCSARILCIGAVPGLQPRCHREPPPSLRSPPETAPEPAGPELDVEAAADEEAATLAEPGPQPCLHISIAGSGLEMTPGLGEGDPRPELVPFDSDSDDESSPSPSGTLQSQASRSTISSSFGNEETPSSKEATAETTSSEEEQEPGFLPLSGSFGPGGPCGTSPMDGRALRRSSHGSFTRGSLEDLLSVDPEAYQSSVWLGTEDGCVHVYQSSDSIRDRRNSMKLQHAASVTCILYLNNQVFVSLANGELVVYQREAGHFWDPQNFKSVTLGTQGSPITKMVSVGGRLWCGCQNRVLVLSPDTLQLEHMFYVGQDSSRCVACMVDSSLGVWVTLKGSAHVCLYHPDTFEQLAEVDVTPPVHRMLAGSDAIIRQHKAACLRITALLVCEELLWVGTSAGVVLTMPTSPGTVSCPRAPLSPTGLGQGHTGHVRFLAAVQLPDGFNLLCPTPPPPPDTGPEKLPSLEHRDSPWHRGPAPARPKMLVISGGDGYEDFRLSSGGGSSSETVGRDDSTNHLLLWRV.

4 disordered regions span residues 22-365 (WSGG…MSDS), 380-466 (YLAS…SNPD), 485-581 (LRVR…AEED), and 602-958 (IQRM…RHVR). Positions 65 to 76 (PLAAPAQPRPLR) are enriched in low complexity. Over residues 87–96 (RRFDAPRLDD) the composition is skewed to basic and acidic residues. The span at 108-122 (PAAAEEAAEGPARGA) shows a compositional bias: low complexity. A phosphoserine mark is found at serine 142 and serine 152. A compositionally biased stretch (low complexity) spans 225-250 (AGARASCSSSSIAASYPVSRSRAASS). Serine 310 bears the Phosphoserine mark. Positions 313-323 (LNLSSMNSAGV) are enriched in polar residues. Serine 326, serine 332, serine 383, serine 387, serine 395, serine 410, and serine 420 each carry phosphoserine. The segment covering 388-397 (RGSSRYSSTE) has biased composition (polar residues). A compositionally biased stretch (basic and acidic residues) spans 445–456 (ALRDGGFEPEKS). Phosphoserine occurs at positions 461 and 546. The span at 562 to 573 (SALKSSSSELLL) shows a compositional bias: low complexity. Position 619 is a phosphoserine (serine 619). Residues 671-680 (LSSSSAQTNH) are compositionally biased toward polar residues. Serine 696 carries the phosphoserine modification. Threonine 699 and threonine 702 each carry phosphothreonine. Residue serine 735 is modified to Phosphoserine. The span at 754–765 (SVDSNLLGSLSP) shows a compositional bias: polar residues. Basic and acidic residues predominate over residues 827-836 (SLSDPSRRGE). Residue serine 914 is modified to Phosphoserine. Residues 917–928 (LIRRGSKKRPAR) show a composition bias toward basic residues. Residues 930–939 (SHQELRRDEG) show a composition bias toward basic and acidic residues. 2 positions are modified to phosphoserine: serine 961 and serine 1002. The interval 1034–1060 (APPSAEAKPPEAARPADEPTPASKCCS) is disordered. Residues 1041–1050 (KPPEAARPAD) are compositionally biased toward basic and acidic residues. A DH domain is found at 1066 to 1254 (MRKHVAMTLL…KQVAERINKG (189 aa)). At serine 1331 the chain carries Phosphoserine. Disordered stretches follow at residues 1564-1584 (HREP…PAGP), 1616-1719 (GLEM…SSHG), 1991-2020 (TPPP…PAPA), and 2036-2055 (FRLS…DDST). A compositionally biased stretch (pro residues) spans 1568–1582 (PPSLRSPPETAPEPA). Residues 1644-1680 (SPSPSGTLQSQASRSTISSSFGNEETPSSKEATAETT) show a composition bias toward low complexity. A compositionally biased stretch (basic and acidic residues) spans 2004-2013 (PSLEHRDSPW).

As to expression, highly expressed in the heart.

In terms of biological role, acts as a guanine nucleotide exchange factor (GEF) for RhoA GTPases. The polypeptide is Rho guanine nucleotide exchange factor 17 (ARHGEF17) (Homo sapiens (Human)).